Reading from the N-terminus, the 127-residue chain is uncharacterized protein (127 aa).

The N-terminal stretch at 1–26 (MKAIYALLAVVALALVAVSLFSQSDS) is a signal peptide.

This is an uncharacterized protein from Archaeoglobus fulgidus (strain ATCC 49558 / DSM 4304 / JCM 9628 / NBRC 100126 / VC-16).